A 304-amino-acid polypeptide reads, in one-letter code: Bifunctional protein FolD (304 aa).

Residues 170–172 (GRS), S195, and I236 contribute to the NADP(+) site.

This sequence belongs to the tetrahydrofolate dehydrogenase/cyclohydrolase family. Homodimer.

It catalyses the reaction (6R)-5,10-methylene-5,6,7,8-tetrahydrofolate + NADP(+) = (6R)-5,10-methenyltetrahydrofolate + NADPH. The enzyme catalyses (6R)-5,10-methenyltetrahydrofolate + H2O = (6R)-10-formyltetrahydrofolate + H(+). It participates in one-carbon metabolism; tetrahydrofolate interconversion. Catalyzes the oxidation of 5,10-methylenetetrahydrofolate to 5,10-methenyltetrahydrofolate and then the hydrolysis of 5,10-methenyltetrahydrofolate to 10-formyltetrahydrofolate. The chain is Bifunctional protein FolD from Anaplasma phagocytophilum (strain HZ).